A 177-amino-acid polypeptide reads, in one-letter code: Large ribosomal subunit protein uL6 (177 aa).

It belongs to the universal ribosomal protein uL6 family. Part of the 50S ribosomal subunit.

This protein binds to the 23S rRNA, and is important in its secondary structure. It is located near the subunit interface in the base of the L7/L12 stalk, and near the tRNA binding site of the peptidyltransferase center. This is Large ribosomal subunit protein uL6 from Herminiimonas arsenicoxydans.